Consider the following 205-residue polypeptide: Holliday junction branch migration complex subunit RuvA (205 aa).

The tract at residues 1 to 62 (MFEYVTGYVE…EDIMALYGFK (62 aa)) is domain I. The segment at 63–141 (TREERLLFTK…DVVPDAFVDL (79 aa)) is domain II. Positions 142–152 (FSDTERFDEKK) are flexible linker. Residues 153–205 (GTSAELDEALEALRALGYAEREVSRVVPELLKESLTTDQYIKKALSLLLNGKR) form a domain III region.

Belongs to the RuvA family. As to quaternary structure, homotetramer. Forms an RuvA(8)-RuvB(12)-Holliday junction (HJ) complex. HJ DNA is sandwiched between 2 RuvA tetramers; dsDNA enters through RuvA and exits via RuvB. An RuvB hexamer assembles on each DNA strand where it exits the tetramer. Each RuvB hexamer is contacted by two RuvA subunits (via domain III) on 2 adjacent RuvB subunits; this complex drives branch migration. In the full resolvosome a probable DNA-RuvA(4)-RuvB(12)-RuvC(2) complex forms which resolves the HJ.

It is found in the cytoplasm. Functionally, the RuvA-RuvB-RuvC complex processes Holliday junction (HJ) DNA during genetic recombination and DNA repair, while the RuvA-RuvB complex plays an important role in the rescue of blocked DNA replication forks via replication fork reversal (RFR). RuvA specifically binds to HJ cruciform DNA, conferring on it an open structure. The RuvB hexamer acts as an ATP-dependent pump, pulling dsDNA into and through the RuvAB complex. HJ branch migration allows RuvC to scan DNA until it finds its consensus sequence, where it cleaves and resolves the cruciform DNA. The protein is Holliday junction branch migration complex subunit RuvA of Bacillus cereus (strain G9842).